The primary structure comprises 66 residues: Large ribosomal subunit protein bL33c (66 aa).

Belongs to the bacterial ribosomal protein bL33 family.

It is found in the plastid. Its subcellular location is the chloroplast. This is Large ribosomal subunit protein bL33c from Solanum bulbocastanum (Wild potato).